A 236-amino-acid polypeptide reads, in one-letter code: uncharacterized protein (236 aa).

The N-terminal stretch at 1–26 is a signal peptide; sequence MTNTWNRLALLIFAVLSLLVAGELQA.

Belongs to the periplasmic pilus chaperone family.

It localises to the periplasm. In terms of biological role, part of the elfADCG-ycbUVF fimbrial operon, which promotes adhesion of bacteria to different abiotic surfaces. Could be required for the biogenesis of fimbriae. This is an uncharacterized protein from Escherichia coli (strain K12).